A 551-amino-acid chain; its full sequence is Probable 4-coumarate--CoA ligase 3 (551 aa).

Residues S205, S206, G207, T208, T209, and K213 each contribute to the ATP site. F253 provides a ligand contact to (E)-4-coumaroyl-AMP. K274 is a CoA binding site. Residues E276–Q346 form an SBD1 region. (E)-4-coumaroyl-AMP-binding residues include A323, Q346, G347, and T351. The ATP site is built by Q346, G347, T351, D430, and R445. Positions G347 to Y409 are SBD2. (E)-4-coumaroyl-AMP-binding residues include K447 and K451. Positions 453 and 454 each coordinate CoA. Residue K537 participates in ATP binding.

This sequence belongs to the ATP-dependent AMP-binding enzyme family. Mg(2+) is required as a cofactor.

The catalysed reaction is (E)-4-coumarate + ATP + CoA = (E)-4-coumaroyl-CoA + AMP + diphosphate. The enzyme catalyses (E)-4-coumarate + ATP + H(+) = (E)-4-coumaroyl-AMP + diphosphate. It catalyses the reaction (E)-4-coumaroyl-AMP + CoA = (E)-4-coumaroyl-CoA + AMP + H(+). It participates in phytoalexin biosynthesis; 3,4',5-trihydroxystilbene biosynthesis; 3,4',5-trihydroxystilbene from trans-4-coumarate: step 1/2. Functionally, carboxylate--CoA ligase that may use 4-coumarate as substrate. Follows a two-step reaction mechanism, wherein the carboxylate substrate first undergoes adenylation by ATP, followed by a thioesterification in the presence of CoA to yield the final CoA thioester. The sequence is that of Probable 4-coumarate--CoA ligase 3 (4cl3) from Dictyostelium discoideum (Social amoeba).